We begin with the raw amino-acid sequence, 416 residues long: Adrenocortical dysplasia protein (416 aa).

Residues 11-13 carry the PWI motif; the sequence is PWI. A Phosphoserine modification is found at Ser-25. The interval 156-245 is interaction with POT1; that stretch reads ESASSSAGLT…SSTGSSQKAR (90 aa). Polar residues predominate over residues 234–251; the sequence is ILSSTGSSQKARGTSASP. The tract at residues 234–306 is disordered; the sequence is ILSSTGSSQK…TSPPCNSTPS (73 aa). Over residues 259-272 the composition is skewed to low complexity; that stretch reads SGASVSLLSALATS. Residues 273-292 show a composition bias toward polar residues; sequence DPGQMDSSQSPPAVGSTSPR. Phosphoserine occurs at positions 313 and 317. A Glycyl lysine isopeptide (Lys-Gly) (interchain with G-Cter in SUMO2) cross-link involves residue Lys-345.

Component of the shelterin complex (telosome) composed of TERF1, TERF2, TINF2, TERF2IP ACD and POT1. Forms heterodimers with POT1. Identified in a complex with POT1 and single-stranded telomeric DNA. Interacts with STN1 and TINF2. Ubiquitous.

It is found in the nucleus. The protein resides in the chromosome. It localises to the telomere. Functionally, component of the shelterin complex (telosome) that is involved in the regulation of telomere length and protection. Shelterin associates with arrays of double-stranded TTAGGG repeats added by telomerase and protects chromosome ends. Without its protective activity, telomeres are no longer hidden from the DNA damage surveillance and chromosome ends are inappropriately processed by DNA repair pathways. Promotes binding of POT1 to single-stranded telomeric DNA. Modulates the inhibitory effects of POT1 on telomere elongation. The ACD-POT1 heterodimer enhances telomere elongation by recruiting telomerase to telomeres and increasing its processivity. May play a role in organogenesis. This Mus musculus (Mouse) protein is Adrenocortical dysplasia protein.